A 226-amino-acid polypeptide reads, in one-letter code: Probable proteasome subunit beta type-7 (226 aa).

The protein belongs to the peptidase T1B family. As to quaternary structure, the 26S proteasome consists of a 20S proteasome core and two 19S regulatory subunits. The 20S proteasome core is composed of 28 subunits that are arranged in four stacked rings, resulting in a barrel-shaped structure. The two end rings are each formed by seven alpha subunits, and the two central rings are each formed by seven beta subunits. The catalytic chamber with the active sites is on the inside of the barrel.

It is found in the cytoplasm. The protein resides in the nucleus. In terms of biological role, non-catalytic component of the proteasome which degrades poly-ubiquitinated proteins in the cytoplasm and in the nucleus. It is essential for the regulated turnover of proteins and for the removal of misfolded proteins. The proteasome is a multicatalytic proteinase complex that is characterized by its ability to cleave peptides with Arg, Phe, Tyr, Leu, and Glu adjacent to the leaving group at neutral or slightly basic pH. It has an ATP-dependent proteolytic activity. In Encephalitozoon cuniculi (strain GB-M1) (Microsporidian parasite), this protein is Probable proteasome subunit beta type-7 (PRE4).